A 187-amino-acid polypeptide reads, in one-letter code: UPF0301 protein Noc_0368 (187 aa).

It belongs to the UPF0301 (AlgH) family.

The sequence is that of UPF0301 protein Noc_0368 from Nitrosococcus oceani (strain ATCC 19707 / BCRC 17464 / JCM 30415 / NCIMB 11848 / C-107).